The primary structure comprises 58 residues: Small ribosomal subunit protein bS21 (58 aa).

The tract at residues 37–58 (FYEKPSVKRKKKSEAARKRKKF) is disordered. Basic residues predominate over residues 43 to 58 (VKRKKKSEAARKRKKF).

It belongs to the bacterial ribosomal protein bS21 family.

In Enterococcus faecalis (strain ATCC 700802 / V583), this protein is Small ribosomal subunit protein bS21.